Reading from the N-terminus, the 433-residue chain is 23S rRNA (uracil(1939)-C(5))-methyltransferase RlmD (433 aa).

The 59-residue stretch at R10–R68 folds into the TRAM domain. Residues C81, C87, C90, and C162 each contribute to the [4Fe-4S] cluster site. The S-adenosyl-L-methionine site is built by Q265, F294, N299, E315, N342, and D363. Residue C389 is the Nucleophile of the active site.

The protein belongs to the class I-like SAM-binding methyltransferase superfamily. RNA M5U methyltransferase family. RlmD subfamily.

It catalyses the reaction uridine(1939) in 23S rRNA + S-adenosyl-L-methionine = 5-methyluridine(1939) in 23S rRNA + S-adenosyl-L-homocysteine + H(+). Functionally, catalyzes the formation of 5-methyl-uridine at position 1939 (m5U1939) in 23S rRNA. The protein is 23S rRNA (uracil(1939)-C(5))-methyltransferase RlmD of Escherichia coli O6:K15:H31 (strain 536 / UPEC).